Here is a 309-residue protein sequence, read N- to C-terminus: Porphobilinogen deaminase (309 aa).

S-(dipyrrolylmethanemethyl)cysteine is present on Cys241.

It belongs to the HMBS family. As to quaternary structure, monomer. Requires dipyrromethane as cofactor.

The enzyme catalyses 4 porphobilinogen + H2O = hydroxymethylbilane + 4 NH4(+). The protein operates within porphyrin-containing compound metabolism; protoporphyrin-IX biosynthesis; coproporphyrinogen-III from 5-aminolevulinate: step 2/4. Functionally, tetrapolymerization of the monopyrrole PBG into the hydroxymethylbilane pre-uroporphyrinogen in several discrete steps. The sequence is that of Porphobilinogen deaminase from Desulforamulus reducens (strain ATCC BAA-1160 / DSM 100696 / MI-1) (Desulfotomaculum reducens).